The primary structure comprises 312 residues: Acetylglutamate kinase (312 aa).

Substrate-binding positions include 74–75, arginine 96, and asparagine 195; that span reads GG.

Belongs to the acetylglutamate kinase family. ArgB subfamily.

Its subcellular location is the cytoplasm. It catalyses the reaction N-acetyl-L-glutamate + ATP = N-acetyl-L-glutamyl 5-phosphate + ADP. It functions in the pathway amino-acid biosynthesis; L-arginine biosynthesis; N(2)-acetyl-L-ornithine from L-glutamate: step 2/4. In terms of biological role, catalyzes the ATP-dependent phosphorylation of N-acetyl-L-glutamate. The polypeptide is Acetylglutamate kinase (Nocardioides sp. (strain ATCC BAA-499 / JS614)).